Here is a 437-residue protein sequence, read N- to C-terminus: Beta-1,3-galactosyl-O-glycosyl-glycoprotein beta-1,6-N-acetylglucosaminyltransferase 3 (437 aa).

At 1–12 (MTSWQRLCWHYR) the chain is on the cytoplasmic side. The helical; Signal-anchor for type II membrane protein transmembrane segment at 13–30 (LWTLGCYMLLAILALKLS) threads the bilayer. Residues 31–437 (LRLKCDFDAM…RHKAIYGTEL (407 aa)) are Lumenal-facing. 4 disulfides stabilise this stretch: C70-C227, C161-C381, C182-C209, and C390-C422. The N-linked (GlcNAc...) asparagine glycan is linked to N288.

It belongs to the glycosyltransferase 14 family. In terms of processing, N-glycosylated.

It is found in the golgi apparatus membrane. The catalysed reaction is a 3-O-[beta-D-galactosyl-(1-&gt;3)-N-acetyl-alpha-D-galactosaminyl]-L-seryl-[protein] + UDP-N-acetyl-alpha-D-glucosamine = 3-O-{beta-D-galactosyl-(1-&gt;3)-[N-acetyl-beta-D-glucosaminyl-(1-&gt;6)]-N-acetyl-alpha-D-galactosaminyl}-L-seryl-[protein] + UDP + H(+). The enzyme catalyses a 3-O-[beta-D-galactosyl-(1-&gt;3)-N-acetyl-alpha-D-galactosaminyl]-L-threonyl-[protein] + UDP-N-acetyl-alpha-D-glucosamine = a 3-O-{beta-D-galactosyl-(1-&gt;3)-[N-acetyl-beta-D-glucosaminyl-(1-&gt;6)]-N-acetyl-alpha-D-galactosaminyl}-L-threonyl-[protein] + UDP + H(+). It carries out the reaction a beta-D-Gal-(1-&gt;4)-beta-D-GlcNAc-(1-&gt;3)-beta-D-Gal-(1-&gt;4)-beta-D-GlcNAc derivative + UDP-N-acetyl-alpha-D-glucosamine = a beta-D-Gal-(1-&gt;4)-beta-D-GlcNAc-(1-&gt;3)-[beta-D-GlcNAc-(1-&gt;6)]-beta-D-Gal-(1-&gt;4)-N-acetyl-beta-D-glucosaminyl derivative + UDP + H(+). It catalyses the reaction 3-O-[N-acetyl-beta-D-glucosaminyl-(1-&gt;3)-N-acetyl-alpha-D-galactosaminyl]-L-seryl-[protein] + UDP-N-acetyl-alpha-D-glucosamine = 3-O-[N-acetyl-beta-D-glucosaminyl-(1-&gt;3)-[N-acetyl-beta-D-glucosaminyl-(1-&gt;6)]-N-acetyl-alpha-D-galactosaminyl]-L-seryl-[protein] + UDP + H(+). The catalysed reaction is a 3-O-[N-acetyl-beta-D-glucosaminyl-(1-&gt;3)-N-acetyl-alpha-D-galactosaminyl]-L-threonyl-[protein] + UDP-N-acetyl-alpha-D-glucosamine = 3-O-[N-acetyl-beta-D-glucosaminyl-(1-&gt;3)-[N-acetyl-beta-D-glucosaminyl-(1-&gt;6)]-N-acetyl-alpha-D-galactosaminyl]-L-threonyl-[protein] + UDP + H(+). The protein operates within protein modification; protein glycosylation. Its function is as follows. Glycosyltransferase that can synthesize all known mucin beta 6 N-acetylglucosaminides. Mediates core 2 and core 4 O-glycan branching, 2 important steps in mucin-type biosynthesis. Also has I-branching enzyme activity by converting linear into branched poly-N-acetyllactosaminoglycans, leading to introduce the blood group I antigen during embryonic development. This chain is Beta-1,3-galactosyl-O-glycosyl-glycoprotein beta-1,6-N-acetylglucosaminyltransferase 3 (Gcnt3), found in Mus musculus (Mouse).